The following is a 158-amino-acid chain: VLIMELINNVAKAHGGYTVFAGVGERTREGNDLYHEMIESGVISLKDKTSKVALVYGQMNEPPGARARVALTGLTVAEYFRDQEGQDVLLFIDNIFRFTQAGSEVSALLGRIPSAVGYQPTLATDMGTMQERITTTSKGSITSVQAIYVPADDLTDPA.

This sequence belongs to the ATPase alpha/beta chains family. F-type ATPases have 2 components, CF(1) - the catalytic core - and CF(0) - the membrane proton channel. CF(1) has five subunits: alpha(3), beta(3), gamma(1), delta(1), epsilon(1). CF(0) has three main subunits: a, b and c.

It is found in the mitochondrion. The protein resides in the mitochondrion inner membrane. The catalysed reaction is ATP + H2O + 4 H(+)(in) = ADP + phosphate + 5 H(+)(out). Mitochondrial membrane ATP synthase (F(1)F(0) ATP synthase or Complex V) produces ATP from ADP in the presence of a proton gradient across the membrane which is generated by electron transport complexes of the respiratory chain. F-type ATPases consist of two structural domains, F(1) - containing the extramembraneous catalytic core, and F(0) - containing the membrane proton channel, linked together by a central stalk and a peripheral stalk. During catalysis, ATP synthesis in the catalytic domain of F(1) is coupled via a rotary mechanism of the central stalk subunits to proton translocation. Subunits alpha and beta form the catalytic core in F(1). Rotation of the central stalk against the surrounding alpha(3)beta(3) subunits leads to hydrolysis of ATP in three separate catalytic sites on the beta subunits. This Schizaphis graminum (Green bug aphid) protein is ATP synthase subunit beta, mitochondrial.